We begin with the raw amino-acid sequence, 503 residues long: Anaerobic nitric oxide reductase flavorubredoxin (503 aa).

Positions 30-210 (LQGSSYNSYL…PFSRLVTAKI (181 aa)) are zinc metallo-hydrolase. Positions 79, 81, 83, 147, 166, and 227 each coordinate Fe cation. Residues 254–393 (ITLFYDTMSN…ICREHGREIA (140 aa)) enclose the Flavodoxin-like domain. FMN contacts are provided by residues 260–264 (TMSNN) and 342–369 (AFGS…ETTL). The Rubredoxin-like domain maps to 451–502 (NGCMQCSVCQWIYDPALGEPMQDVTPGTMWSDVPDSFLCPECGLGKDVFNPI). Residues cysteine 456, cysteine 459, cysteine 489, and cysteine 492 each coordinate Fe cation.

This sequence in the N-terminal section; belongs to the zinc metallo-hydrolase group 3 family. Homotetramer. Fe cation serves as cofactor. It depends on FMN as a cofactor.

The protein localises to the cytoplasm. The protein operates within nitrogen metabolism; nitric oxide reduction. Its function is as follows. Anaerobic nitric oxide reductase; uses NADH to detoxify nitric oxide (NO), protecting several 4Fe-4S NO-sensitive enzymes. Has at least 2 reductase partners, only one of which (NorW, flavorubredoxin reductase) has been identified. NO probably binds to the di-iron center; electrons enter from the NorW at rubredoxin and are transferred sequentially to the FMN center and the di-iron center. Also able to function as an aerobic oxygen reductase. This chain is Anaerobic nitric oxide reductase flavorubredoxin, found in Pectobacterium carotovorum subsp. carotovorum (strain PC1).